Reading from the N-terminus, the 202-residue chain is Hypoxanthine-guanine phosphoribosyltransferase (202 aa).

Diphosphate contacts are provided by K66 and G67. Positions 122 and 123 each coordinate Mg(2+). The active-site Proton acceptor is D126. Residues K154, 175 to 176 (FV), and D182 contribute to the GMP site. Residue R188 coordinates diphosphate.

It belongs to the purine/pyrimidine phosphoribosyltransferase family. Homodimer and homotetramer in equilibrium. The presence or absence of divalent metal ions, as well as phosphate, can affect the oligomerization state of the enzyme. Likely functions as a tetramer (rather than a dimer) in its biological environment, which is the most active form. The dimeric structure is also active though ~50% of that of the tetramer. Mg(2+) is required as a cofactor.

Its subcellular location is the cytoplasm. The enzyme catalyses IMP + diphosphate = hypoxanthine + 5-phospho-alpha-D-ribose 1-diphosphate. It catalyses the reaction GMP + diphosphate = guanine + 5-phospho-alpha-D-ribose 1-diphosphate. It participates in purine metabolism; IMP biosynthesis via salvage pathway; IMP from hypoxanthine: step 1/1. Its pathway is purine metabolism; GMP biosynthesis via salvage pathway; GMP from guanine: step 1/1. Its activity is regulated as follows. Competitively inhibited by acyclic nucleoside phosphonates (ANPs) with Ki values as low as 0.69 uM. Prodrugs of these compounds arrest the growth of a virulent strain of M.tuberculosis with MIC50 values as low as 4.5 uM and possess low cytotoxicity in mammalian cells. Inhibited by pyrrolidine nucleoside bisphosphonates, which are also able to arrest the growth of virulent M.tuberculosis not only in its replicating phase but also in its latent phase, and to arrest the growth of M.tuberculosis in infected macrophages while having low cytotoxicity in mammalian cells. Functionally, purine salvage pathway enzyme that catalyzes the transfer of the ribosyl-5-phosphate group from 5-phospho-alpha-D-ribose 1-diphosphate (PRPP) to the N9 position of the 6-oxopurines hypoxanthine and guanine to form the corresponding ribonucleotides IMP (inosine 5'-monophosphate) and GMP (guanosine 5'-monophosphate), with the release of PPi. Thus, specifically recycles hypoxanthine and guanine imported from the external medium, and converts them to IMP and GMP, respectively. Cannot use xanthine as substrate. This Mycobacterium tuberculosis (strain ATCC 25618 / H37Rv) protein is Hypoxanthine-guanine phosphoribosyltransferase.